The primary structure comprises 414 residues: MRPRTHGAPPRNIMSTIPKWFKGAPFGVQSHRFDVSAVYPNQKKFSTFTEAPYSRHHSVELSHIGPGTYNSKDTCFSKKFLEQKLGSGWSQAHEATRLTQLPHFHYQAIKKEKEQQVHKRGPGSYNIKDFITELQKKPQSKRGLLSSGETRFRGFIGNYYPGPGNYGEKGNPYTQLEEKAWNRSHSDGLMCRVSNKPPLFHQGSGLGPGTYTIKSDLETFVKKSTGNRGPYDIFSGERSSPLPYGHYSVQKMKPKELTDYKSFLDEMNSQHKKKQGVFSKYPRDPKHPTERIFWTTLSQCPKNMDIAGPGSWLPHETEQKHVNRPPFLLASKRCGLKAYQMILGTWNPVGVGRYLNTTLMESIDRRQRYRSLYMSEPKRYLQDLTRDRLMQKRITPITKGKCRPTVDYNSDPTP.

This is Ciliary microtubule-associated protein 2 (Cimap2) from Mus musculus (Mouse).